The sequence spans 110 residues: Iron-sulfur cluster assembly protein CyaY (110 aa).

Belongs to the frataxin family.

Functionally, involved in iron-sulfur (Fe-S) cluster assembly. May act as a regulator of Fe-S biogenesis. The polypeptide is Iron-sulfur cluster assembly protein CyaY (Pseudomonas fluorescens (strain Pf0-1)).